A 173-amino-acid chain; its full sequence is 2-C-methyl-D-erythritol 2,4-cyclodiphosphate synthase (173 aa).

2 residues coordinate a divalent metal cation: D17 and H19. Residues 17–19 (DVH) and 49–50 (HS) each bind 4-CDP-2-C-methyl-D-erythritol 2-phosphate. H57 serves as a coordination point for a divalent metal cation. Residues 76 to 80 (FPNTD), 147 to 150 (TTTE), F154, and R157 contribute to the 4-CDP-2-C-methyl-D-erythritol 2-phosphate site.

This sequence belongs to the IspF family. As to quaternary structure, homotrimer. The cofactor is a divalent metal cation.

It carries out the reaction 4-CDP-2-C-methyl-D-erythritol 2-phosphate = 2-C-methyl-D-erythritol 2,4-cyclic diphosphate + CMP. The protein operates within isoprenoid biosynthesis; isopentenyl diphosphate biosynthesis via DXP pathway; isopentenyl diphosphate from 1-deoxy-D-xylulose 5-phosphate: step 4/6. Functionally, involved in the biosynthesis of isopentenyl diphosphate (IPP) and dimethylallyl diphosphate (DMAPP), two major building blocks of isoprenoid compounds. Catalyzes the conversion of 4-diphosphocytidyl-2-C-methyl-D-erythritol 2-phosphate (CDP-ME2P) to 2-C-methyl-D-erythritol 2,4-cyclodiphosphate (ME-CPP) with a corresponding release of cytidine 5-monophosphate (CMP). The polypeptide is 2-C-methyl-D-erythritol 2,4-cyclodiphosphate synthase (Ehrlichia canis (strain Jake)).